The sequence spans 272 residues: Phosphate import ATP-binding protein PstB (272 aa).

The region spanning 20–267 (VKKEVVYETN…PADQRTADYI (248 aa)) is the ABC transporter domain. Position 58 to 65 (58 to 65 (GPSGCGKS)) interacts with ATP.

This sequence belongs to the ABC transporter superfamily. Phosphate importer (TC 3.A.1.7) family. As to quaternary structure, the complex is composed of two ATP-binding proteins (PstB), two transmembrane proteins (PstC and PstA) and a solute-binding protein (PstS).

The protein resides in the cell membrane. It carries out the reaction phosphate(out) + ATP + H2O = ADP + 2 phosphate(in) + H(+). Part of the ABC transporter complex PstSACB involved in phosphate import. Responsible for energy coupling to the transport system. This Geobacillus kaustophilus (strain HTA426) protein is Phosphate import ATP-binding protein PstB.